Here is a 220-residue protein sequence, read N- to C-terminus: Nucleolar protein 12 (220 aa).

Residues 31–86 (HKRKMQRRKTAVEEIKRKIKEEQKKMKEERHKEYMKMLKEREEALCELEENDELEE) adopt a coiled-coil conformation. The interval 109–220 (ISDLDLSGIR…QTGKTRRRRN (112 aa)) is disordered. Positions 139 to 148 (EKGADEEKPK) are enriched in basic and acidic residues. 2 stretches are compositionally biased toward basic residues: residues 176 to 186 (RSQRKSGKRPS) and 205 to 220 (KTQRRKQTGKTRRRRN).

It belongs to the RRP17 family.

The protein localises to the nucleus. The protein resides in the nucleolus. In terms of biological role, may bind to rRNA. This chain is Nucleolar protein 12 (nol12), found in Xenopus laevis (African clawed frog).